Here is a 282-residue protein sequence, read N- to C-terminus: MAAVTPALIKELRERTGVGMGKCKEALEEANGDMELAIANLRKAGMASAVKKEGRETKEGMIGTAENEKTIAIVEVNAETDFVVKNERFKEFLENIAREVANTNPSSLDAFLQQKYSKESSLTVDQYRATIVQTIGENIQIKRIMTLQKSPERSFGIYSHLGGKIVTMVEITGSNQEEALAKDIAMHIAATAPDYLSPEKIPQEIITSEKDIAKGQIQGKPANIVDKIVEGKINAFYDTNCLVRQKYIKDDSLSITDLVNQRSKVVGKELAVTNFIRWNVGQ.

The interval 80-83 (TDFV) is involved in Mg(2+) ion dislocation from EF-Tu.

This sequence belongs to the EF-Ts family.

It is found in the cytoplasm. In terms of biological role, associates with the EF-Tu.GDP complex and induces the exchange of GDP to GTP. It remains bound to the aminoacyl-tRNA.EF-Tu.GTP complex up to the GTP hydrolysis stage on the ribosome. This chain is Elongation factor Ts, found in Protochlamydia amoebophila (strain UWE25).